The primary structure comprises 200 residues: Cytochrome c biogenesis ATP-binding export protein CcmA (200 aa).

In terms of domain architecture, ABC transporter spans 2–200 (LDVIELDFDY…NKADYEEYHL (199 aa)). Residue 34-41 (GSNGAGKT) coordinates ATP.

It belongs to the ABC transporter superfamily. CcmA exporter (TC 3.A.1.107) family. In terms of assembly, the complex is composed of two ATP-binding proteins (CcmA) and two transmembrane proteins (CcmB).

Its subcellular location is the cell inner membrane. It carries out the reaction heme b(in) + ATP + H2O = heme b(out) + ADP + phosphate + H(+). In terms of biological role, part of the ABC transporter complex CcmAB involved in the biogenesis of c-type cytochromes; once thought to export heme, this seems not to be the case, but its exact role is uncertain. Responsible for energy coupling to the transport system. The sequence is that of Cytochrome c biogenesis ATP-binding export protein CcmA from Legionella pneumophila (strain Lens).